An 85-amino-acid chain; its full sequence is Large ribosomal subunit protein bL27 (85 aa).

Positions 1-21 (MAHKKAGGSSRNGRDSEAKRL) are disordered.

It belongs to the bacterial ribosomal protein bL27 family.

This is Large ribosomal subunit protein bL27 from Aeromonas hydrophila subsp. hydrophila (strain ATCC 7966 / DSM 30187 / BCRC 13018 / CCUG 14551 / JCM 1027 / KCTC 2358 / NCIMB 9240 / NCTC 8049).